The sequence spans 194 residues: Cytochrome b-245 light chain (194 aa).

Over 2 to 7 (GQIEWA) the chain is Cytoplasmic. Residues 8-30 (MWANEQALASGLILVAGGIVATA) traverse the membrane as a helical segment. The Extracellular segment spans residues 31 to 35 (GRFTQ). Residues 36–53 (WYFGTYAIAAGVLVCLLE) traverse the membrane as a helical segment. Topologically, residues 54-69 (YPRGSRAKGSTLERCG) are cytoplasmic. An intramembrane segment occupies 70–80 (QRYLTAVLKLL). Residues 81-86 (GPLSRN) lie on the Cytoplasmic side of the membrane. The chain crosses the membrane as a helical span at residues 87–104 (YYFRAALHLALSVPAGFL). Leucine 105 is a topological domain (extracellular). The helical transmembrane segment at 106-126 (ATILGTVCLVIASIIYLLAAV) threads the bilayer. Residues 127–194 (RGEQWTPIEP…NPIPVTDEVV (68 aa)) lie on the Cytoplasmic side of the membrane. Residues 134 to 194 (IEPRPKERPQ…NPIPVTDEVV (61 aa)) form a disordered region. Phosphothreonine is present on threonine 147. Lysine 149 participates in a covalent cross-link: Glycyl lysine isopeptide (Lys-Gly) (interchain with G-Cter in ubiquitin).

This sequence belongs to the p22phox family. Component of the phagocyte NADPH oxidase core complex/cytochrome b558 complex, composed of CYBB (heavy chain (beta)) and CYBA (light chain (alpha)). Component of the phagocyte NADPH oxidase complex composed of an obligatory core heterodimer formed by the membrane proteins CYBA and CYBB and the cytosolic regulatory subunits NCF1/p47-phox, NCF2/p67-phox, NCF4/p40-phox and the small GTPase RAC1 or RAC2. Interacts with NCF1 (via SH3 domain). Interacts with SH3PXD2A. Interacts with DUOX1, DUOX2 and TPO. Interacts with NOX4; this interaction mediates superoxide generation. Interacts with calprotectin (S100A8/9). Interacts with GBP7. Interacts with NOXO1. Forms a heterodimer with NOX3 and is essential for activity and cell membrane localization of NOX3. Interacts with NOX1. In terms of processing, phosphorylation at Thr-147 enhances NADPH oxidase activity by promoting NCF1/p47-phox binding. Ubiquitinated at Lys-149 likely by RNF145.

It localises to the cell membrane. Functionally, subunit of NADPH oxidase complexes that is required for the NADPH oxidase activity that generates, in various cell types, superoxide from molecular oxygen utilizing NADPH as an electron donor. Subunit of the phagocyte NADPH oxidase complex that mediates the transfer of electrons from cytosolic NADPH to O2 to produce the superoxide anion (O2(-)). In the activated complex, electrons are first transferred from NADPH to flavin adenine dinucleotide (FAD) and subsequently transferred via two heme molecules to molecular oxygen, producing superoxide through an outer-sphere reaction. Activation of the NADPH oxidase complex is initiated by the assembly of cytosolic subunits of the NADPH oxidase complex with the core NADPH oxidase complex to form a complex at the plasma membrane or phagosomal membrane. This activation process is initiated by phosphorylation dependent binding of the cytosolic NCF1/p47-phox subunit to the C-terminus of CYBA/p22-phox. Aassociates with NOX3 to form a functional NADPH oxidase constitutively generating superoxide. The chain is Cytochrome b-245 light chain from Oryctolagus cuniculus (Rabbit).